The chain runs to 247 residues: ATP synthase subunit a, chloroplastic (247 aa).

The next 5 helical transmembrane spans lie at 38–58 (QVLI…ILII), 95–115 (VPFI…GALL), 134–154 (INTT…AGLS), 199–219 (LVVV…VMFL), and 220–240 (GLFT…AYIG).

This sequence belongs to the ATPase A chain family. In terms of assembly, F-type ATPases have 2 components, CF(1) - the catalytic core - and CF(0) - the membrane proton channel. CF(1) has five subunits: alpha(3), beta(3), gamma(1), delta(1), epsilon(1). CF(0) has four main subunits: a, b, b' and c.

The protein localises to the plastid. It localises to the chloroplast thylakoid membrane. Functionally, key component of the proton channel; it plays a direct role in the translocation of protons across the membrane. This Glycine max (Soybean) protein is ATP synthase subunit a, chloroplastic.